The sequence spans 1482 residues: Cystic fibrosis transmembrane conductance regulator (1482 aa).

Residues 1–77 (MQRSPLEKAS…KLINALQRCF (77 aa)) are Cytoplasmic-facing. The chain crosses the membrane as a helical span at residues 78-98 (FWRFTFYGILLYLGEVTKAIQ). Residues 81-365 (FTFYGILLYL…WAVQTWYDSL (285 aa)) form the ABC transmembrane type-1 1 domain. Topologically, residues 99–122 (PLLLGRIIASYDPDNKMERSIAIY) are extracellular. A helical transmembrane segment spans residues 123–146 (LGIGLCLLFIMRTLLLHPAIFGLH). The Cytoplasmic segment spans residues 147-195 (HIGMQMRIALFSLIYKKTLKLSSRVLDKISIGQLVSLLSNNLNKFDEGL). Residues 196 to 216 (ALAHFVWIAPLQVMLLMGLLW) traverse the membrane as a helical segment. The Extracellular portion of the chain corresponds to 217-222 (ELLQAS). The helical transmembrane segment at 223–243 (AFCGLAFLIVLALLQAGLGRM) threads the bilayer. The Cytoplasmic segment spans residues 244–298 (MMKYRDQRAGKINERLVITSEMIENIQSVKAYCWEEAMEKMIENLRQTELRLTRK). Residues 299–319 (AAYVRYVNSSAFFFSGFFVVF) traverse the membrane as a helical segment. Topologically, residues 320–339 (LSVLPYALIKGIILRKIFTT) are extracellular. The chain crosses the membrane as a helical span at residues 340–358 (ISFCIVLRMAVTRQFPWAV). Residues 359 to 859 (QTWYDSLGAI…YLRYITVHKN (501 aa)) are Cytoplasmic-facing. ATP contacts are provided by residues W401, 458–465 (GSTGAGKT), and Q493. The 224-residue stretch at 423–646 (SGDNRLFFSN…RPDFSSKLMG (224 aa)) folds into the ABC transporter 1 domain. C524 carries the S-palmitoyl cysteine lipid modification. S549 and S660 each carry phosphoserine. Positions 654–832 (SAERRNSILT…EEINEEDLKE (179 aa)) are disordered R region. S670 is modified (phosphoserine; by PKA). S686 is modified (phosphoserine). A Glycyl lysine isopeptide (Lys-Gly) (interchain with G-Cter in ubiquitin) cross-link involves residue K688. 2 positions are modified to phosphoserine: S700 and S712. T717 is subject to Phosphothreonine. Residues S737, S768, S791, S796, and S814 each carry the phosphoserine modification. A helical membrane pass occupies residues 860 to 880 (LIFVLIWCLVIFLAEVAASLV). The region spanning 860–1156 (LIFVLIWCLV…AVNSSIDVDS (297 aa)) is the ABC transmembrane type-1 2 domain. The Extracellular portion of the chain corresponds to 881 to 919 (AFWLIEKTRPQDKGNSTRSTNNTSPVIITSTSAFYMFYI). Residues N895 and N901 are each glycosylated (N-linked (GlcNAc...) asparagine). The chain crosses the membrane as a discontinuously helical span at residues 920-940 (YVGVADSLLALGFLRGLPLVH). Topologically, residues 941–991 (TLITVSKILHQKMLHSVLHAPMSTLNTLKAGAILNRFSKDIAILDDLLPLT) are cytoplasmic. The chain crosses the membrane as a helical span at residues 992–1012 (IFDFIQLVLIVIGAVVVVSIL). The Extracellular segment spans residues 1013-1014 (KP). A helical membrane pass occupies residues 1015–1035 (YIFLAAVPVIIAFVILRAYFL). Residues 1036 to 1096 (QTSQQLKQLE…TATWFLYLST (61 aa)) are Cytoplasmic-facing. Residues 1097 to 1117 (LRWFQMRIEMIFVVFFVAVTF) form a helical membrane-spanning segment. Residues 1118-1131 (ISILTTGEGEGTVG) are Extracellular-facing. The chain crosses the membrane as a helical span at residues 1132–1152 (IILTLAMNIMSTLQWAVNSSI). The Cytoplasmic segment spans residues 1153–1482 (DVDSLMRSVS…AEEEVQDTRL (330 aa)). The region spanning 1212–1445 (ITVKDLTAKY…KSLFQQAISP (234 aa)) is the ABC transporter 2 domain. Residues Y1221 and 1246–1253 (GRTGSGKS) contribute to the ATP site. An interaction with GORASP2 region spans residues 1388-1482 (RALKQAFADC…AEEEVQDTRL (95 aa)). C1397 carries the S-palmitoyl cysteine lipid modification. S1446 and S1458 each carry phosphoserine. Residues 1454 to 1482 (QRSSSKHRSRAQITALKEEAEEEVQDTRL) form a disordered region. Positions 1472 to 1482 (EAEEEVQDTRL) are enriched in acidic residues. Residues 1480–1482 (TRL) carry the PDZ-binding motif.

It belongs to the ABC transporter superfamily. ABCC family. CFTR transporter (TC 3.A.1.202) subfamily. Monomer; does not require oligomerization for channel activity. May form oligomers in the membrane. Interacts with SLC26A3, SLC26A6 and NHERF1. Interacts with SHANK2. Interacts with MYO6. Interacts (via C-terminus) with GOPC (via PDZ domain); this promotes CFTR internalization and thereby decreases channel activity. Interacts with SLC4A7 through NHERF1. Found in a complex with MYO5B and RAB11A. Interacts with ANO1. Interacts with SLC26A8. Interacts with AHCYL1; the interaction increases CFTR activity. Interacts with CSE1L. The core-glycosylated form interacts with GORASP2 (via PDZ GRASP-type 1 domain) in respone to ER stress. Interacts with MARCHF2; the interaction leads to CFTR ubiqtuitination and degradation. Interacts with ADGRG2. Post-translationally, N-glycosylated. Phosphorylated; cAMP treatment promotes phosphorylation and activates the channel. Dephosphorylation decreases the ATPase activity (in vitro). Phosphorylation at PKA sites activates the channel. Phosphorylation at PKC sites enhances the response to phosphorylation by PKA. Phosphorylated by AMPK; this inhibits channel activity. In terms of processing, ubiquitinated, leading to its degradation in the lysosome. Deubiquitination by USP10 in early endosomes enhances its endocytic recycling to the cell membrane. Ubiquitinated by RNF185 during ER stress. Ubiquitinated by MARCHF2.

It is found in the apical cell membrane. Its subcellular location is the early endosome membrane. The protein resides in the cell membrane. It localises to the recycling endosome membrane. The protein localises to the endoplasmic reticulum membrane. It is found in the nucleus. The catalysed reaction is ATP + H2O + closed Cl(-) channel = ADP + phosphate + open Cl(-) channel.. It carries out the reaction chloride(in) = chloride(out). It catalyses the reaction hydrogencarbonate(in) = hydrogencarbonate(out). The enzyme catalyses ATP + H2O = ADP + phosphate + H(+). Epithelial ion channel that plays an important role in the regulation of epithelial ion and water transport and fluid homeostasis. Mediates the transport of chloride ions across the cell membrane. Possesses an intrinsic ATPase activity and utilizes ATP to gate its channel; the passive flow of anions through the channel is gated by cycles of ATP binding and hydrolysis by the ATP-binding domains. The ion channel is also permeable to HCO(3)(-); selectivity depends on the extracellular chloride concentration. Exerts its function also by modulating the activity of other ion channels and transporters. Contributes to the regulation of the pH and the ion content of the epithelial fluid layer. Modulates the activity of the epithelial sodium channel (ENaC) complex, in part by regulating the cell surface expression of the ENaC complex. May regulate bicarbonate secretion and salvage in epithelial cells by regulating the transporter SLC4A7. Can inhibit the chloride channel activity of ANO1. Plays a role in the chloride and bicarbonate homeostasis during sperm epididymal maturation and capacitation. This chain is Cystic fibrosis transmembrane conductance regulator, found in Rhinolophus ferrumequinum (Greater horseshoe bat).